Here is an 89-residue protein sequence, read N- to C-terminus: Small ribosomal subunit protein uS15 (89 aa).

This sequence belongs to the universal ribosomal protein uS15 family. Part of the 30S ribosomal subunit. Forms a bridge to the 50S subunit in the 70S ribosome, contacting the 23S rRNA.

Functionally, one of the primary rRNA binding proteins, it binds directly to 16S rRNA where it helps nucleate assembly of the platform of the 30S subunit by binding and bridging several RNA helices of the 16S rRNA. In terms of biological role, forms an intersubunit bridge (bridge B4) with the 23S rRNA of the 50S subunit in the ribosome. In Mycobacterium sp. (strain JLS), this protein is Small ribosomal subunit protein uS15.